A 439-amino-acid polypeptide reads, in one-letter code: Serine hydroxymethyltransferase (439 aa).

Residues 1-20 (MNAPHRDETTASHRDDGFFT) form a disordered region. (6S)-5,6,7,8-tetrahydrofolate is bound by residues L136 and 140–142 (GHL). N6-(pyridoxal phosphate)lysine is present on K245.

This sequence belongs to the SHMT family. Homodimer. Requires pyridoxal 5'-phosphate as cofactor.

It is found in the cytoplasm. It carries out the reaction (6R)-5,10-methylene-5,6,7,8-tetrahydrofolate + glycine + H2O = (6S)-5,6,7,8-tetrahydrofolate + L-serine. It participates in one-carbon metabolism; tetrahydrofolate interconversion. Its pathway is amino-acid biosynthesis; glycine biosynthesis; glycine from L-serine: step 1/1. Functionally, catalyzes the reversible interconversion of serine and glycine with tetrahydrofolate (THF) serving as the one-carbon carrier. This reaction serves as the major source of one-carbon groups required for the biosynthesis of purines, thymidylate, methionine, and other important biomolecules. Also exhibits THF-independent aldolase activity toward beta-hydroxyamino acids, producing glycine and aldehydes, via a retro-aldol mechanism. This is Serine hydroxymethyltransferase from Jannaschia sp. (strain CCS1).